We begin with the raw amino-acid sequence, 344 residues long: Fructose-1,6-bisphosphatase class 1 (344 aa).

4 residues coordinate Mg(2+): E107, D129, L131, and D132. Substrate-binding residues include N224, Y252, and K282. E288 serves as a coordination point for Mg(2+).

The protein belongs to the FBPase class 1 family. Homotetramer. Requires Mg(2+) as cofactor.

It localises to the cytoplasm. It catalyses the reaction beta-D-fructose 1,6-bisphosphate + H2O = beta-D-fructose 6-phosphate + phosphate. It participates in carbohydrate biosynthesis; Calvin cycle. The polypeptide is Fructose-1,6-bisphosphatase class 1 (Synechococcus sp. (strain ATCC 27144 / PCC 6301 / SAUG 1402/1) (Anacystis nidulans)).